Consider the following 447-residue polypeptide: Eukaryotic translation initiation factor 3 subunit E (447 aa).

Residues 253–421 (LELFFNAGYI…GTVVMNHPPS (169 aa)) enclose the PCI domain.

This sequence belongs to the eIF-3 subunit E family. In terms of assembly, component of the eukaryotic translation initiation factor 3 (eIF-3) complex.

The protein localises to the cytoplasm. Component of the eukaryotic translation initiation factor 3 (eIF-3) complex, which is involved in protein synthesis of a specialized repertoire of mRNAs and, together with other initiation factors, stimulates binding of mRNA and methionyl-tRNAi to the 40S ribosome. The eIF-3 complex specifically targets and initiates translation of a subset of mRNAs involved in cell proliferation. This Chaetomium globosum (strain ATCC 6205 / CBS 148.51 / DSM 1962 / NBRC 6347 / NRRL 1970) (Soil fungus) protein is Eukaryotic translation initiation factor 3 subunit E.